Consider the following 302-residue polypeptide: MQALLTEILDEVRPLIGQGKVADYIPALAGVVPDQLGIAVYGNDGQLHVAGDARTPFSIQSISKVFSLVQAIGHSGEAIWQRLGHEPSGQPFNSLVQLEFERGKPRNPFINAGALVICDINQSRYAAPALSMRDFVRRLSGNPEVTVDNHVAESEYQHRARNAAAAYLMQSFGNFHNEVEAVLRSYFSCCALRMSCVDLARAFGFLANQGFCQHSGEQILSPRQSKQINAIMATSGLYDEAGNFAYRVGLPGKSGVGGGIVAVVPGQFSVCVWSPELNAAGNSLTGIKALELLSERIGWSVF.

Substrate-binding residues include S61, N111, E155, N162, Y186, Y238, and V256.

The protein belongs to the glutaminase family. As to quaternary structure, homotetramer.

It carries out the reaction L-glutamine + H2O = L-glutamate + NH4(+). This chain is Glutaminase, found in Ectopseudomonas mendocina (strain ymp) (Pseudomonas mendocina).